A 280-amino-acid chain; its full sequence is 4-diphosphocytidyl-2-C-methyl-D-erythritol kinase (280 aa).

The active site involves lysine 8. 91-101 (PVAAGLAGGSS) provides a ligand contact to ATP. The active site involves aspartate 133.

Belongs to the GHMP kinase family. IspE subfamily.

The catalysed reaction is 4-CDP-2-C-methyl-D-erythritol + ATP = 4-CDP-2-C-methyl-D-erythritol 2-phosphate + ADP + H(+). It participates in isoprenoid biosynthesis; isopentenyl diphosphate biosynthesis via DXP pathway; isopentenyl diphosphate from 1-deoxy-D-xylulose 5-phosphate: step 3/6. Its function is as follows. Catalyzes the phosphorylation of the position 2 hydroxy group of 4-diphosphocytidyl-2C-methyl-D-erythritol. The sequence is that of 4-diphosphocytidyl-2-C-methyl-D-erythritol kinase from Clostridium kluyveri (strain NBRC 12016).